The following is a 234-amino-acid chain: Probable cyclic nucleotide phosphodiesterase Rmag_0669 (234 aa).

Fe cation is bound by residues Asp11, His13, Asp49, Asn79, His145, His184, and His186. Residues His13, Asp49, and 79–80 each bind AMP; that span reads NH. An AMP-binding site is contributed by His186.

Belongs to the cyclic nucleotide phosphodiesterase class-III family. It depends on Fe(2+) as a cofactor.

This Ruthia magnifica subsp. Calyptogena magnifica protein is Probable cyclic nucleotide phosphodiesterase Rmag_0669.